The following is a 181-amino-acid chain: ATP synthase subunit delta (181 aa).

It belongs to the ATPase delta chain family. F-type ATPases have 2 components, F(1) - the catalytic core - and F(0) - the membrane proton channel. F(1) has five subunits: alpha(3), beta(3), gamma(1), delta(1), epsilon(1). F(0) has three main subunits: a(1), b(2) and c(10-14). The alpha and beta chains form an alternating ring which encloses part of the gamma chain. F(1) is attached to F(0) by a central stalk formed by the gamma and epsilon chains, while a peripheral stalk is formed by the delta and b chains.

It is found in the cell membrane. In terms of biological role, f(1)F(0) ATP synthase produces ATP from ADP in the presence of a proton or sodium gradient. F-type ATPases consist of two structural domains, F(1) containing the extramembraneous catalytic core and F(0) containing the membrane proton channel, linked together by a central stalk and a peripheral stalk. During catalysis, ATP synthesis in the catalytic domain of F(1) is coupled via a rotary mechanism of the central stalk subunits to proton translocation. Functionally, this protein is part of the stalk that links CF(0) to CF(1). It either transmits conformational changes from CF(0) to CF(1) or is implicated in proton conduction. The polypeptide is ATP synthase subunit delta (Oceanobacillus iheyensis (strain DSM 14371 / CIP 107618 / JCM 11309 / KCTC 3954 / HTE831)).